A 259-amino-acid polypeptide reads, in one-letter code: Thiazole synthase (259 aa).

The Schiff-base intermediate with DXP role is filled by Lys-100. Residues Gly-161, 187–188, and 209–210 each bind 1-deoxy-D-xylulose 5-phosphate; these read AG and NT.

This sequence belongs to the ThiG family. Homotetramer. Forms heterodimers with either ThiH or ThiS.

The protein localises to the cytoplasm. The enzyme catalyses [ThiS sulfur-carrier protein]-C-terminal-Gly-aminoethanethioate + 2-iminoacetate + 1-deoxy-D-xylulose 5-phosphate = [ThiS sulfur-carrier protein]-C-terminal Gly-Gly + 2-[(2R,5Z)-2-carboxy-4-methylthiazol-5(2H)-ylidene]ethyl phosphate + 2 H2O + H(+). It functions in the pathway cofactor biosynthesis; thiamine diphosphate biosynthesis. Its function is as follows. Catalyzes the rearrangement of 1-deoxy-D-xylulose 5-phosphate (DXP) to produce the thiazole phosphate moiety of thiamine. Sulfur is provided by the thiocarboxylate moiety of the carrier protein ThiS. In vitro, sulfur can be provided by H(2)S. The protein is Thiazole synthase of Halalkalibacterium halodurans (strain ATCC BAA-125 / DSM 18197 / FERM 7344 / JCM 9153 / C-125) (Bacillus halodurans).